A 480-amino-acid polypeptide reads, in one-letter code: NADH-quinone oxidoreductase subunit N (480 aa).

13 helical membrane-spanning segments follow: residues 5–25 (NFLC…LFLY), 40–60 (IAIV…FTMY), 69–89 (ISSQ…FLVF), 110–130 (VIML…NFVM), 162–182 (YILT…FLYG), 204–224 (LGFV…PFHL), 237–257 (VTAY…IFVL), 266–286 (LIWN…GNLF), 296–316 (FFAF…IAGT), 324–344 (IFYT…IASV), 368–388 (AFVM…AGFF), 404–424 (ILVF…LLIV), and 450–470 (MVIC…YEYI).

It belongs to the complex I subunit 2 family. NDH-1 is composed of 14 different subunits. Subunits NuoA, H, J, K, L, M, N constitute the membrane sector of the complex.

The protein localises to the cell inner membrane. The catalysed reaction is a quinone + NADH + 5 H(+)(in) = a quinol + NAD(+) + 4 H(+)(out). In terms of biological role, NDH-1 shuttles electrons from NADH, via FMN and iron-sulfur (Fe-S) centers, to quinones in the respiratory chain. The immediate electron acceptor for the enzyme in this species is believed to be a menaquinone. Couples the redox reaction to proton translocation (for every two electrons transferred, four hydrogen ions are translocated across the cytoplasmic membrane), and thus conserves the redox energy in a proton gradient. The chain is NADH-quinone oxidoreductase subunit N from Azobacteroides pseudotrichonymphae genomovar. CFP2.